The sequence spans 397 residues: Chorismate synthase (397 aa).

The NADP(+) site is built by arginine 40 and arginine 46. Residues 129 to 131 (RAS), 257 to 258 (QA), glycine 302, 317 to 321 (KPIAT), and arginine 343 each bind FMN.

The protein belongs to the chorismate synthase family. Homotetramer. It depends on FMNH2 as a cofactor.

It catalyses the reaction 5-O-(1-carboxyvinyl)-3-phosphoshikimate = chorismate + phosphate. It participates in metabolic intermediate biosynthesis; chorismate biosynthesis; chorismate from D-erythrose 4-phosphate and phosphoenolpyruvate: step 7/7. Catalyzes the anti-1,4-elimination of the C-3 phosphate and the C-6 proR hydrogen from 5-enolpyruvylshikimate-3-phosphate (EPSP) to yield chorismate, which is the branch point compound that serves as the starting substrate for the three terminal pathways of aromatic amino acid biosynthesis. This reaction introduces a second double bond into the aromatic ring system. The protein is Chorismate synthase of Prosthecochloris aestuarii (strain DSM 271 / SK 413).